We begin with the raw amino-acid sequence, 831 residues long: MYSVLFRQAEESSQLAGAKGMNLIKLTKHGLPVPDGFIIQTNALARFMEDNQLQETSENVEGGIISGTFSDELKDELTSSFYKLRESYRSVAVRSSSASEDLEGASFAGQYETYLNIKTEEEFLAKVKECWASFFSGRVSSYKKKMNNQIAEPLMGIVVQGLIDSEMSGVIFSRNPVTHDDRELLISASYGLGEAVVSGNVTPDTFIVNKSSFEIQKEIGAKEIYMESAAEGIAEKETSEDMRSRFCLTDEQVIELAEITKKTEDLYGYPVDIEFGIADHQIYLLQARPITTIDQDKKAAEEKRSFMITDTDMNDFWLNMESNIEGPVSPLFSSFIVPALEYGLKKSMQKFPIGVVVDEVKLYRGHIYSKNQGGQQPPSEDCGKELFPILSEHMYDIINHTYLPFYRTLDQLAQTEHTAESALEAFQKLKAFYLTAYEEHFNIVFPQILLTNKLQAMYQDIQGESENAHFYEMLTGKMNKSLETDRCLWLFSVEVQENPNLLAIFENNKPEQLQEKLEQTDEGRHFLKNVHEFLQEYGWRSVKSHDLIEQIWVENPYFALANIQNYVRNGYHFDNEFQKTKEKREKLYNEFLESIEDPGLRTEFDRYYQWTLNSANIKDDHHFYIDAMLDAKARIFLLKIGELLAENGVIQDREDLWFLYDDEVEQALLHPVSLQEKAEKRRQIFHEYELAQAPAYLGTPTKEQLKAAEEIVGAVIEDEKNTENHIFGIAASSGIATGPVKIIRDANEFSQFAPGDVLVCKMTTPLWTSLFQDAKAIITDTGGILSHAAIIAREYGIPAVLGTRTATERLRDGDIITVDGSSGKITVVSRS.

His-787 serves as the catalytic Tele-phosphohistidine intermediate.

It belongs to the PEP-utilizing enzyme family.

This is an uncharacterized protein from Bacillus subtilis (strain 168).